Consider the following 237-residue polypeptide: Pre-protein VI (237 aa).

A propeptide spanning residues 1-32 (MDDPFSTLAPRRGTQPLLSNWATIGISELHGG) is cleaved from the precursor. Residues 33 to 57 (ALGWGSWWSNLSRLGSSFGSNLKNL) form an amphipathic alpha-helix essential for membrane lytic activity region. The tract at residues 35-56 (GWGSWWSNLSRLGSSFGSNLKN) is involved in endosomal membrane lysis. Residues 51–77 (GSNLKNLGLKAWNSSTGQALRQHLKDT) are interaction with hexon protein. Positions 70–79 (LRQHLKDTNL) match the Nuclear export signal motif. The residue at position 146 (T146) is a Phosphothreonine; by host. Positions 218-229 (GTLDSIMGLGLQ) match the Nuclear export signal motif. The interaction with hexon protein stretch occupies residues 220–226 (LDSIMGL). Residues 227 to 237 (GLQPIKRRRCF) are binds to importin alpha/beta, involved in hexon nuclear import. The Nuclear localization signal motif lies at 232–235 (KRRR).

It belongs to the adenoviridae protein VI family. In terms of assembly, interacts with hexon protein; this interaction allows nuclear import of hexon trimers and possibly pre-capsid assembly. Interacts (via C-terminal NLS) with importin alpha/beta. As to quaternary structure, interacts (via PPxY motif) with host NEDD4 ubiquitine ligase; this interaction might play a role in virus intracellular transport during entry. Part of a complex composed of the core-capsid bridging protein, the endosome lysis protein VI and the hexon-linking protein VIII; these interactions bridge the virus core to the capsid. Interacts with peripentonal hexons; this interaction stabilizes the capsid by gluing two peripentonal hexons together and joining them with an adjacent group-of-nine hexon. Heterodimer with the viral protease; disulfide-linked. Interacts with the viral protease. Ubiquitinated by Nedd4 following partial capsid disassembly; which might play a role in intracellular virus movement during entry. Post-translationally, contains the major nuclear import and export signals. Proteolytically removed during virion maturation. The processing of the C-terminus turns the precursor into a mature viral structural protein and abrogates its ability to promote hexon import and act as a potential chaperone protein.

Its subcellular location is the host nucleus. It localises to the host cytoplasm. The protein localises to the virion. During virus assembly, promotes hexon trimers nuclear import through nuclear pore complexes via an importin alpha/beta-dependent mechanism. By analogy to herpesviruses capsid assembly, might act as a chaperone to promote the formation of the icosahedral capsid. In terms of biological role, structural component of the virion that provides increased stability to the particle shell through its interaction with the core-capsid bridging protein and the hexon-linking protein VIII. Fibers shedding during virus entry into host cell allows the endosome lysis protein to be exposed as a membrane-lytic peptide. Exhibits pH-independent membrane fragmentation activity and probably mediates viral rapid escape from host endosome via organellar membrane lysis. It is not clear if it then remains partially associated with the capsid and involved in the intracellular microtubule-dependent transport of capsid to the nucleus, or if it is lost during endosomal penetration. Its function is as follows. Cofactor that activates the viral protease. Binds to viral protease in a 1:1 ratio. This is Pre-protein VI from Mus musculus (Mouse).